The following is a 448-amino-acid chain: Tubulin beta-2 chain (448 aa).

Glutamine 11, glutamate 69, serine 138, glycine 142, threonine 143, glycine 144, asparagine 204, and asparagine 226 together coordinate GTP. Glutamate 69 serves as a coordination point for Mg(2+). The segment at 421–448 (EYQQYQDATADEDGEYEDELDGQEEEDM) is disordered. Positions 429-448 (TADEDGEYEDELDGQEEEDM) are enriched in acidic residues.

Belongs to the tubulin family. In terms of assembly, dimer of alpha and beta chains. A typical microtubule is a hollow water-filled tube with an outer diameter of 25 nm and an inner diameter of 15 nM. Alpha-beta heterodimers associate head-to-tail to form protofilaments running lengthwise along the microtubule wall with the beta-tubulin subunit facing the microtubule plus end conferring a structural polarity. Microtubules usually have 13 protofilaments but different protofilament numbers can be found in some organisms and specialized cells. Mg(2+) is required as a cofactor.

The protein resides in the cytoplasm. The protein localises to the cytoskeleton. Functionally, tubulin is the major constituent of microtubules, a cylinder consisting of laterally associated linear protofilaments composed of alpha- and beta-tubulin heterodimers. Microtubules grow by the addition of GTP-tubulin dimers to the microtubule end, where a stabilizing cap forms. Below the cap, tubulin dimers are in GDP-bound state, owing to GTPase activity of alpha-tubulin. The chain is Tubulin beta-2 chain (TUBB2) from Eleusine indica (Goosegrass).